The primary structure comprises 461 residues: tRNA-splicing endonuclease subunit Sen2 (461 aa).

Disordered stretches follow at residues Gly140–Pro176 and Gly190–Glu210. A compositionally biased stretch (polar residues) spans Thr144–Pro176. Over residues Lys201–Glu210 the composition is skewed to basic and acidic residues. Active-site residues include Tyr365, His373, and Lys412.

This sequence belongs to the tRNA-intron endonuclease family. As to quaternary structure, tRNA splicing endonuclease is a heterotetramer composed of SEN2, SEN15, SEN34/LENG5 and SEN54.

Its subcellular location is the nucleus. The catalysed reaction is pretRNA = a 3'-half-tRNA molecule with a 5'-OH end + a 5'-half-tRNA molecule with a 2',3'-cyclic phosphate end + an intron with a 2',3'-cyclic phosphate and a 5'-hydroxyl terminus.. Functionally, constitutes one of the two catalytic subunit of the tRNA-splicing endonuclease complex, a complex responsible for identification and cleavage of the splice sites in pre-tRNA. It cleaves pre-tRNA at the 5'- and 3'-splice sites to release the intron. The products are an intron and two tRNA half-molecules bearing 2',3'-cyclic phosphate and 5'-OH termini. There are no conserved sequences at the splice sites, but the intron is invariably located at the same site in the gene, placing the splice sites an invariant distance from the constant structural features of the tRNA body. Probably carries the active site for 5'-splice site cleavage. The tRNA splicing endonuclease is also involved in mRNA processing via its association with pre-mRNA 3'-end processing factors, establishing a link between pre-tRNA splicing and pre-mRNA 3'-end formation, suggesting that the endonuclease subunits function in multiple RNA-processing events. The sequence is that of tRNA-splicing endonuclease subunit Sen2 (TSEN2) from Gallus gallus (Chicken).